Consider the following 233-residue polypeptide: Phosphoglycolate phosphatase (233 aa).

D9 (nucleophile) is an active-site residue. Positions 9 and 11 each coordinate Mg(2+). Residue K154 coordinates substrate. Residues D177 and D181 each coordinate Mg(2+).

This sequence belongs to the archaeal SPP-like hydrolase family. The cofactor is Mg(2+).

The enzyme catalyses 2-phosphoglycolate + H2O = glycolate + phosphate. Its function is as follows. Catalyzes the dephosphorylation of 2-phosphoglycolate. This Pyrococcus abyssi (strain GE5 / Orsay) protein is Phosphoglycolate phosphatase.